Reading from the N-terminus, the 355-residue chain is Arginine kinase (355 aa).

In terms of domain architecture, Phosphagen kinase N-terminal spans T6–N90. G63–Y67 lines the substrate pocket. The Phosphagen kinase C-terminal domain occupies F118–L355. ATP is bound by residues S121–R125 and H184. Substrate is bound at residue E224. R228 is a binding site for ATP. Residue C270 participates in substrate binding. ATP-binding positions include R279–H283 and R308–E313. E313 provides a ligand contact to substrate.

It belongs to the ATP:guanido phosphotransferase family.

It catalyses the reaction L-arginine + ATP = N(omega)-phospho-L-arginine + ADP + H(+). The polypeptide is Arginine kinase (ARGK) (Plodia interpunctella (Indianmeal moth)).